The sequence spans 595 residues: DNA mismatch repair protein MutL (595 aa).

It belongs to the DNA mismatch repair MutL/HexB family.

This protein is involved in the repair of mismatches in DNA. It is required for dam-dependent methyl-directed DNA mismatch repair. May act as a 'molecular matchmaker', a protein that promotes the formation of a stable complex between two or more DNA-binding proteins in an ATP-dependent manner without itself being part of a final effector complex. This chain is DNA mismatch repair protein MutL, found in Endomicrobium trichonymphae.